A 326-amino-acid polypeptide reads, in one-letter code: Ribose-phosphate pyrophosphokinase (326 aa).

ATP is bound by residues 45–47 (NGE) and 104–105 (RQ). Residues His138 and Asp178 each coordinate Mg(2+). Lys202 is an active-site residue. Residues Arg204, Asp230, and 234-238 (DTGGT) each bind D-ribose 5-phosphate.

This sequence belongs to the ribose-phosphate pyrophosphokinase family. Class I subfamily. As to quaternary structure, homohexamer. Mg(2+) is required as a cofactor.

Its subcellular location is the cytoplasm. It carries out the reaction D-ribose 5-phosphate + ATP = 5-phospho-alpha-D-ribose 1-diphosphate + AMP + H(+). It participates in metabolic intermediate biosynthesis; 5-phospho-alpha-D-ribose 1-diphosphate biosynthesis; 5-phospho-alpha-D-ribose 1-diphosphate from D-ribose 5-phosphate (route I): step 1/1. Its function is as follows. Involved in the biosynthesis of the central metabolite phospho-alpha-D-ribosyl-1-pyrophosphate (PRPP) via the transfer of pyrophosphoryl group from ATP to 1-hydroxyl of ribose-5-phosphate (Rib-5-P). In Mycobacterium bovis (strain ATCC BAA-935 / AF2122/97), this protein is Ribose-phosphate pyrophosphokinase.